A 609-amino-acid chain; its full sequence is Numb-like protein (609 aa).

Disordered regions lie at residues 1–68 (MSRS…QWQA), 223–283 (GSFR…PVAA), 372–421 (ASAG…EEVS), 434–464 (QQQQQQQQQQQQQAASVAPVPTMPPALQPFP), and 537–609 (AGAF…EIEL). The segment covering 19–29 (PPAPCGAPGPP) has biased composition (pro residues). One can recognise a PID domain in the interval 74 to 223 (RKGTCSFPVR…ASRTSFAREG (150 aa)). 2 positions are modified to phosphoserine: S224 and S228. The span at 233–245 (PAEREAPDKKKAE) shows a compositional bias: basic and acidic residues. A compositionally biased stretch (low complexity) spans 246-259 (AAAAPTVAPGPAQP). S263 is modified (phosphoserine). Position 279 is a phosphothreonine (T279). Residues 409-418 (TPSEAERWLE) show a composition bias toward basic and acidic residues. S411 carries the post-translational modification Phosphoserine. Residues 434 to 446 (QQQQQQQQQQQQQ) show a composition bias toward low complexity. Pro residues-rich tracts occupy residues 454 to 464 (PTMPPALQPFP) and 558 to 573 (NGAPWPPEPAPAPAPE).

Interacts (via PTB domain) with MAP3K7IP2 (via C-terminal). Interacts (via C-terminal) with TRAF6 (via TRAF domains). Associates with EPS15 and NOTCH1.

Its subcellular location is the cytoplasm. In terms of biological role, plays a role in the process of neurogenesis. Required throughout embryonic neurogenesis to maintain neural progenitor cells, also called radial glial cells (RGCs), by allowing their daughter cells to choose progenitor over neuronal cell fate. Not required for the proliferation of neural progenitor cells before the onset of embryonic neurogenesis. Also required postnatally in the subventricular zone (SVZ) neurogenesis by regulating SVZ neuroblasts survival and ependymal wall integrity. Negative regulator of NF-kappa-B signaling pathway. The inhibition of NF-kappa-B activation is mediated at least in part, by preventing MAP3K7IP2 to interact with polyubiquitin chains of TRAF6 and RIPK1 and by stimulating the 'Lys-48'-linked polyubiquitination and degradation of TRAF6 in cortical neurons. This is Numb-like protein (NUMBL) from Homo sapiens (Human).